We begin with the raw amino-acid sequence, 459 residues long: Flavin-containing monooxygenase FMO GS-OX5 (459 aa).

17–22 serves as a coordination point for FAD; that stretch reads GAGAAG. 212-217 serves as a coordination point for NADP(+); that stretch reads GNFASG.

This sequence belongs to the FMO family.

The catalysed reaction is a (Z)-omega-(methylsulfanyl)-N-sulfo-alkylhydroximate S-glucoside + NADPH + O2 + H(+) = a (Z)-omega-(methylsulfinyl)-alkyl-glucosinolate + NADP(+) + H2O. Functionally, catalyzes the conversion of methylthioalkyl glucosinolates into methylsulfinylalkyl glucosinolates. Specific for 8-methylthiooctyl (8-MTO) glucosinolates. This chain is Flavin-containing monooxygenase FMO GS-OX5 (FMOGS-OX5), found in Arabidopsis thaliana (Mouse-ear cress).